Here is a 221-residue protein sequence, read N- to C-terminus: 3-phospho-D-glycerate guanylyltransferase (221 aa).

It belongs to the CofC family.

The catalysed reaction is (2R)-3-phosphoglycerate + GTP + H(+) = 3-[(R)-glyceryl]-diphospho-5'-guanosine + diphosphate. The enzyme catalyses (2S)-2-phospholactate + GTP + H(+) = (2S)-lactyl-2-diphospho-5'-guanosine + diphosphate. The protein operates within cofactor biosynthesis; coenzyme F420 biosynthesis. Its function is as follows. Guanylyltransferase that catalyzes the activation of (2R)-3-phosphoglycerate (3PG) as 3-[(R)-glyceryl]-diphospho-5'-guanosine, via the condensation of 3PG with GTP. It is involved in the biosynthesis of a derivative of the hydride carrier cofactor coenzyme F420, 3PG-F420. Can also use (2S)-2-phospholactate (2-PL), with lower turnover, and has weak activity with phosphoenolpyruvate (PEP). The sequence is that of 3-phospho-D-glycerate guanylyltransferase from Mycetohabitans rhizoxinica (strain DSM 19002 / CIP 109453 / HKI 454) (Paraburkholderia rhizoxinica).